The following is an 882-amino-acid chain: Holliday junction resolvase MOC1, chloroplastic (882 aa).

2 disordered regions span residues 87–148 (IRDG…QTPT) and 323–351 (TPAAASQTPPTTVTSCGTGSGAPATPRAA). A compositionally biased stretch (polar residues) spans 91-111 (PNSNSRCSTVRTHATRSKSTG). The span at 112–125 (PSRATSSGPATAAP) shows a compositional bias: low complexity. Polar residues predominate over residues 134–148 (NDTQDGGLTSEQTPT). A compositionally biased stretch (low complexity) spans 323-337 (TPAAASQTPPTTVTS). 4 residues coordinate Mg(2+): aspartate 397, glutamate 552, asparagine 629, and aspartate 634. A disordered region spans residues 710 to 882 (KVERKAQARS…DGGVSGSESE (173 aa)). The span at 732 to 743 (EEPEAQAEEEQA) shows a compositional bias: acidic residues. Composition is skewed to low complexity over residues 744-758 (EAGTGVVAAAAGAAA), 769-783 (VESGSEAAVAEVAAG), 810-819 (SGKSSSKAEA), and 830-844 (ASVGSSSVGSSSVGS). Composition is skewed to gly residues over residues 845–857 (SSGGGGGGGGGVK) and 868–882 (AKAGSDGGVSGSESE).

Mg(2+) serves as cofactor. It depends on Mn(2+) as a cofactor.

It localises to the plastid. Its subcellular location is the chloroplast. The catalysed reaction is Endonucleolytic cleavage at a junction such as a reciprocal single-stranded crossover between two homologous DNA duplexes (Holliday junction).. In terms of biological role, a structure-specific endonuclease that resolves Holliday junction (HJ) intermediates during genetic recombination. Cleaves 4-way DNA junctions introducing paired nicks in opposing strands, leaving a 5'-terminal phosphate and a 3'-terminal hydroxyl group that are ligated to produce recombinant products. Mediates chloroplast nucleoid segregation during chloroplast division. The protein is Holliday junction resolvase MOC1, chloroplastic of Chlamydomonas reinhardtii (Chlamydomonas smithii).